Consider the following 574-residue polypeptide: Alpha-mannosidase I MNS5 (574 aa).

Residues 1 to 9 lie on the Cytoplasmic side of the membrane; it reads MSCPIHPRR. Residues 10 to 26 traverse the membrane as a helical; Signal-anchor for type II membrane protein segment; sequence LFLCLLISLTFFVVDPS. Residues 27–574 are Lumenal-facing; that stretch reads SQHIEVKKKQ…VGYCGLWNPL (548 aa). N-linked (GlcNAc...) asparagine glycosylation is found at N89, N107, and N121. Catalysis depends on E134, which acts as the Proton donor. A glycan (N-linked (GlcNAc...) asparagine) is linked at N201. D274 is an active-site residue. N349 carries an N-linked (GlcNAc...) asparagine glycan. E367 serves as the catalytic Proton donor. E388 is a catalytic residue. Residue T471 coordinates Ca(2+). N-linked (GlcNAc...) asparagine glycosylation occurs at N494.

It belongs to the glycosyl hydrolase 47 family. Ca(2+) serves as cofactor.

It is found in the endoplasmic reticulum membrane. Its pathway is protein modification; protein glycosylation. Functionally, can convert Man(9)GlcNAc(2) and Man(8)GlcNAc(2) into N-glycans with a terminal alpha-1,6-linked Man residue in the C-branch. Functions in the formation of unique N-glycan structures that are specifically recognized by components of the endoplasmic reticulum-associated degradation (ERAD) machinery, which leads to the degradation of misfolded glycoproteins. Most likely generates N-glycan signal on misfolded glycoproteins that is subsequently recognized by OS9. Required for ERAD of the heavily glycosylated and misfolded BRI1 variants BRI1-5 and BRI1-9. Does not seem to play role in N-glycan processing of correctly folded proteins destined for secretion. In Arabidopsis thaliana (Mouse-ear cress), this protein is Alpha-mannosidase I MNS5 (MNS5).